The following is a 215-amino-acid chain: Probable transaldolase (215 aa).

The active-site Schiff-base intermediate with substrate is Lys-83.

This sequence belongs to the transaldolase family. Type 3B subfamily.

Its subcellular location is the cytoplasm. The enzyme catalyses D-sedoheptulose 7-phosphate + D-glyceraldehyde 3-phosphate = D-erythrose 4-phosphate + beta-D-fructose 6-phosphate. The protein operates within carbohydrate degradation; pentose phosphate pathway; D-glyceraldehyde 3-phosphate and beta-D-fructose 6-phosphate from D-ribose 5-phosphate and D-xylulose 5-phosphate (non-oxidative stage): step 2/3. Transaldolase is important for the balance of metabolites in the pentose-phosphate pathway. The sequence is that of Probable transaldolase from Methanococcus vannielii (strain ATCC 35089 / DSM 1224 / JCM 13029 / OCM 148 / SB).